A 338-amino-acid polypeptide reads, in one-letter code: Anthranilate phosphoribosyltransferase (338 aa).

Residues glycine 81, glycine 84–aspartate 85, threonine 89, asparagine 91–threonine 94, lysine 109–serine 117, and alanine 121 contribute to the 5-phospho-alpha-D-ribose 1-diphosphate site. Glycine 81 contributes to the anthranilate binding site. Mg(2+) is bound at residue serine 93. Asparagine 112 serves as a coordination point for anthranilate. Arginine 167 contributes to the anthranilate binding site. The Mg(2+) site is built by aspartate 226 and glutamate 227.

It belongs to the anthranilate phosphoribosyltransferase family. In terms of assembly, homodimer. The cofactor is Mg(2+).

The enzyme catalyses N-(5-phospho-beta-D-ribosyl)anthranilate + diphosphate = 5-phospho-alpha-D-ribose 1-diphosphate + anthranilate. It participates in amino-acid biosynthesis; L-tryptophan biosynthesis; L-tryptophan from chorismate: step 2/5. Its function is as follows. Catalyzes the transfer of the phosphoribosyl group of 5-phosphorylribose-1-pyrophosphate (PRPP) to anthranilate to yield N-(5'-phosphoribosyl)-anthranilate (PRA). The protein is Anthranilate phosphoribosyltransferase of Cereibacter sphaeroides (strain ATCC 17025 / ATH 2.4.3) (Rhodobacter sphaeroides).